We begin with the raw amino-acid sequence, 446 residues long: tRNA-2-methylthio-N(6)-dimethylallyladenosine synthase (446 aa).

Positions 3 to 120 (KKLFIETHGC…LPEMIDAARS (118 aa)) constitute an MTTase N-terminal domain. 6 residues coordinate [4Fe-4S] cluster: Cys12, Cys49, Cys83, Cys157, Cys161, and Cys164. A Radical SAM core domain is found at 143–375 (RVDGPTAFVS…QGRIHQQGYE (233 aa)). Residues 378–442 (RRMVGSTQRI…PHSLRGTLIE (65 aa)) enclose the TRAM domain.

It belongs to the methylthiotransferase family. MiaB subfamily. In terms of assembly, monomer. [4Fe-4S] cluster is required as a cofactor.

It localises to the cytoplasm. The catalysed reaction is N(6)-dimethylallyladenosine(37) in tRNA + (sulfur carrier)-SH + AH2 + 2 S-adenosyl-L-methionine = 2-methylsulfanyl-N(6)-dimethylallyladenosine(37) in tRNA + (sulfur carrier)-H + 5'-deoxyadenosine + L-methionine + A + S-adenosyl-L-homocysteine + 2 H(+). Functionally, catalyzes the methylthiolation of N6-(dimethylallyl)adenosine (i(6)A), leading to the formation of 2-methylthio-N6-(dimethylallyl)adenosine (ms(2)i(6)A) at position 37 in tRNAs that read codons beginning with uridine. The polypeptide is tRNA-2-methylthio-N(6)-dimethylallyladenosine synthase (Pseudomonas paraeruginosa (strain DSM 24068 / PA7) (Pseudomonas aeruginosa (strain PA7))).